The chain runs to 115 residues: Ribonuclease P protein component (115 aa).

This sequence belongs to the RnpA family. In terms of assembly, consists of a catalytic RNA component (M1 or rnpB) and a protein subunit.

It carries out the reaction Endonucleolytic cleavage of RNA, removing 5'-extranucleotides from tRNA precursor.. Its function is as follows. RNaseP catalyzes the removal of the 5'-leader sequence from pre-tRNA to produce the mature 5'-terminus. It can also cleave other RNA substrates such as 4.5S RNA. The protein component plays an auxiliary but essential role in vivo by binding to the 5'-leader sequence and broadening the substrate specificity of the ribozyme. The protein is Ribonuclease P protein component of Staphylococcus epidermidis (strain ATCC 35984 / DSM 28319 / BCRC 17069 / CCUG 31568 / BM 3577 / RP62A).